The following is a 142-amino-acid chain: 3-hydroxyacyl-[acyl-carrier-protein] dehydratase FabZ (142 aa).

Histidine 46 is a catalytic residue.

It belongs to the thioester dehydratase family. FabZ subfamily.

It is found in the cytoplasm. It carries out the reaction a (3R)-hydroxyacyl-[ACP] = a (2E)-enoyl-[ACP] + H2O. In terms of biological role, involved in unsaturated fatty acids biosynthesis. Catalyzes the dehydration of short chain beta-hydroxyacyl-ACPs and long chain saturated and unsaturated beta-hydroxyacyl-ACPs. The chain is 3-hydroxyacyl-[acyl-carrier-protein] dehydratase FabZ from Thermus thermophilus (strain ATCC BAA-163 / DSM 7039 / HB27).